The following is a 221-amino-acid chain: Glutathione S-transferase A3 (221 aa).

Alanine 2 is modified (N-acetylalanine). The 81-residue stretch at 3–83 (GKPVLHYFDG…YIASKYNLYG (81 aa)) folds into the GST N-terminal domain. Residue lysine 4 is modified to N6-succinyllysine. Glutathione-binding positions include tyrosine 9, arginine 45, 54 to 55 (QV), and 67 to 68 (QT). In terms of domain architecture, GST C-terminal spans 85–207 (DMKERAIIDM…LQPGSQRKPF (123 aa)).

In terms of assembly, homodimer.

The protein localises to the cytoplasm. The catalysed reaction is RX + glutathione = an S-substituted glutathione + a halide anion + H(+). It catalyses the reaction androst-5-ene-3,17-dione = androst-4-ene-3,17-dione. The enzyme catalyses pregn-5-ene-3,20-dione = progesterone. Conjugation of reduced glutathione to a wide number of exogenous and endogenous hydrophobic electrophiles. Catalyzes isomerization reactions that contribute to the biosynthesis of steroid hormones. Efficiently catalyze obligatory double-bond isomerizations of delta(5)-androstene-3,17-dione and delta(5)-pregnene-3,20-dione, precursors to testosterone and progesterone, respectively. Has a high catalytic activity for aflatoxin B1-8,9 epoxide. In Mus musculus (Mouse), this protein is Glutathione S-transferase A3.